The sequence spans 579 residues: MFS-type transporter ppz2 (579 aa).

The interval 1–23 (MQTATALEDSANAPSPAASSQGQ) is disordered. Low complexity predominate over residues 10-20 (SANAPSPAASS). Asparagine 38 carries an N-linked (GlcNAc...) asparagine glycan. 14 helical membrane passes run 48–68 (ALIMVALCCAVFLHALDNTII), 83–103 (AAYTWIGSTYLLAVAASTMVW), 121–141 (LCFFTGSLIAALSANFAMLIA), 145–165 (IQGIGGAGVNVLANICVGDLF), 171–191 (GLYYGVIGGVWAVALSLGPVV), 203–223 (WCFYINLPLCAVVFVIIILLL), 236–256 (IAAIDWVGAALSIGSTLMILL), 269–289 (SATVICLVVFGFIGWILCFSW), 298–318 (LLPVSIFKQIPTLAVLAACFI), 336–356 (AVLGATPILSGVYLLPTAVSI), 374–394 (LTPIYIGFVLQTLGYGLFIDL), 403–423 (IIVFQIIGGLGVGFNFQAPMV), 438–460 (TSAYNFMRNVSGAISVVIGQTVF), and 516–536 (SMWIMYTAFSAAALVVCPFLG).

Belongs to the major facilitator superfamily. TCR/Tet family.

The protein resides in the membrane. Its function is as follows. MFS-type transporter; part of the gene cluster that mediates the biosynthesis of pyrrolopyrazines, secondary metabolites showing insecticidal activity. Probably involved in the secretion of peramine and other pyrrolopyrazines. This is MFS-type transporter ppz2 from Metarhizium majus (strain ARSEF 297).